Here is a 529-residue protein sequence, read N- to C-terminus: Bifunctional purine biosynthesis protein PurH (529 aa).

Residues 1 to 148 (MQQRRPVRRA…KNHKDVAIVV (148 aa)) form the MGS-like domain.

This sequence belongs to the PurH family.

It catalyses the reaction (6R)-10-formyltetrahydrofolate + 5-amino-1-(5-phospho-beta-D-ribosyl)imidazole-4-carboxamide = 5-formamido-1-(5-phospho-D-ribosyl)imidazole-4-carboxamide + (6S)-5,6,7,8-tetrahydrofolate. The enzyme catalyses IMP + H2O = 5-formamido-1-(5-phospho-D-ribosyl)imidazole-4-carboxamide. It functions in the pathway purine metabolism; IMP biosynthesis via de novo pathway; 5-formamido-1-(5-phospho-D-ribosyl)imidazole-4-carboxamide from 5-amino-1-(5-phospho-D-ribosyl)imidazole-4-carboxamide (10-formyl THF route): step 1/1. It participates in purine metabolism; IMP biosynthesis via de novo pathway; IMP from 5-formamido-1-(5-phospho-D-ribosyl)imidazole-4-carboxamide: step 1/1. This is Bifunctional purine biosynthesis protein PurH from Salmonella schwarzengrund (strain CVM19633).